The following is an 815-amino-acid chain: DNA topoisomerase 1 (815 aa).

The region spanning 3–119 (KHLLIVESPA…QRIVFTEITP (117 aa)) is the Toprim domain. The Mg(2+) site is built by glutamate 9 and aspartate 82. The Topo IA-type catalytic domain occupies 133-573 (ASDLVDAQQA…KFWVPFKELV (441 aa)). Positions 167–172 (SAGRVQ) are interaction with DNA. Catalysis depends on tyrosine 308, which acts as the O-(5'-phospho-DNA)-tyrosine intermediate. The segment at 760–815 (GKPARKNFSTKKTATKNETRKQTTKKRTTDAKATKKVSDKPVKKQIKKRIAPNITE) is disordered. Over residues 774–801 (TKNETRKQTTKKRTTDAKATKKVSDKPV) the composition is skewed to basic and acidic residues.

The protein belongs to the type IA topoisomerase family. As to quaternary structure, monomer. It depends on Mg(2+) as a cofactor.

The enzyme catalyses ATP-independent breakage of single-stranded DNA, followed by passage and rejoining.. Its function is as follows. Releases the supercoiling and torsional tension of DNA, which is introduced during the DNA replication and transcription, by transiently cleaving and rejoining one strand of the DNA duplex. Introduces a single-strand break via transesterification at a target site in duplex DNA. The scissile phosphodiester is attacked by the catalytic tyrosine of the enzyme, resulting in the formation of a DNA-(5'-phosphotyrosyl)-enzyme intermediate and the expulsion of a 3'-OH DNA strand. The free DNA strand then undergoes passage around the unbroken strand, thus removing DNA supercoils. Finally, in the religation step, the DNA 3'-OH attacks the covalent intermediate to expel the active-site tyrosine and restore the DNA phosphodiester backbone. This is DNA topoisomerase 1 from Xylella fastidiosa (strain 9a5c).